The sequence spans 101 residues: Small ribosomal subunit protein uS14 (101 aa).

This sequence belongs to the universal ribosomal protein uS14 family. Part of the 30S ribosomal subunit. Contacts proteins S3 and S10.

In terms of biological role, binds 16S rRNA, required for the assembly of 30S particles and may also be responsible for determining the conformation of the 16S rRNA at the A site. This is Small ribosomal subunit protein uS14 from Chromobacterium violaceum (strain ATCC 12472 / DSM 30191 / JCM 1249 / CCUG 213 / NBRC 12614 / NCIMB 9131 / NCTC 9757 / MK).